We begin with the raw amino-acid sequence, 69 residues long: Large ribosomal subunit protein uL29 (69 aa).

It belongs to the universal ribosomal protein uL29 family.

The protein is Large ribosomal subunit protein uL29 (rpmC) of Lactococcus lactis subsp. lactis (strain IL1403) (Streptococcus lactis).